The chain runs to 295 residues: Tyrosine recombinase XerC (295 aa).

The Core-binding (CB) domain maps to 1–84 (MTLEEQFLSY…SLKSFYRFLT (84 aa)). In terms of domain architecture, Tyr recombinase spans 105–289 (KLPEFFYQDE…SMQHLTVEYR (185 aa)). Catalysis depends on residues arginine 145, lysine 169, histidine 241, arginine 244, and histidine 267. Tyrosine 276 functions as the O-(3'-phospho-DNA)-tyrosine intermediate in the catalytic mechanism.

The protein belongs to the 'phage' integrase family. XerC subfamily. Forms a cyclic heterotetrameric complex composed of two molecules of XerC and two molecules of XerD.

It is found in the cytoplasm. Its function is as follows. Site-specific tyrosine recombinase, which acts by catalyzing the cutting and rejoining of the recombining DNA molecules. The XerC-XerD complex is essential to convert dimers of the bacterial chromosome into monomers to permit their segregation at cell division. It also contributes to the segregational stability of plasmids. The chain is Tyrosine recombinase XerC from Lactobacillus delbrueckii subsp. bulgaricus (strain ATCC 11842 / DSM 20081 / BCRC 10696 / JCM 1002 / NBRC 13953 / NCIMB 11778 / NCTC 12712 / WDCM 00102 / Lb 14).